Reading from the N-terminus, the 197-residue chain is Putative AgrB-like protein (197 aa).

4 helical membrane-spanning segments follow: residues 29-49 (FGFTIILHYLFTLLLVLAVGL), 79-99 (SIGCTLLSVLFITAISWVPFA), 102-122 (YAWILYGISGGLLIWKYAPYY), and 143-163 (ILIVLFIILAMLMSTQGLVLG).

The protein belongs to the AgrB family.

The protein resides in the cell membrane. Its function is as follows. May be involved in the proteolytic processing of a quorum sensing system signal molecule precursor. This chain is Putative AgrB-like protein, found in Halalkalibacterium halodurans (strain ATCC BAA-125 / DSM 18197 / FERM 7344 / JCM 9153 / C-125) (Bacillus halodurans).